Here is a 486-residue protein sequence, read N- to C-terminus: MATALPRTLGELQLYRILQKANLLSYFDAFIQQGGDDVQQLCEAGEEEFLEIMALVGMASKPLHVRRLQKALRDWVTNPGLFNQPLTSLPVSSIPIYKLPEGSPTWLGISCNSYERSSSSREPHLKIPKCAATTCVQSLGQGKSEVGSLALQSVSDSRLWQGHHATESEHSLSPADLGSPASPKESSEALDAAAALSVAECVERMAPTLPKSDLSEVKELLKNNKKLAKMIGHIFEMSDEDPHKEEEIRKYSAIYGRFDSKRKDGKHLTLHELTVNEAAAQLCVKDNALLTRRDELFALARQVSREVTYKYTYRTTRLKCGERDELSPKRIKIEDGFPDFQESVPTLFQQARAKSEELAGLGSQQAEKGMAKQMELLCAQAGYERLQQERRLTAGLYRQSSGEQSPDGGLPSDSSDGQGERPLNLRIPSVQNRQPHHFVVDGELSRLYSSEAKSHSSESLGILKDYPHSAFTLEKKVIKTEPEDSR.

The NCD1 stretch occupies residues 4-82 (ALPRTLGELQ…RDWVTNPGLF (79 aa)). Glycyl lysine isopeptide (Lys-Gly) (interchain with G-Cter in SUMO2) cross-links involve residues Lys-126, Lys-129, and Lys-143. A disordered region spans residues 160–187 (WQGHHATESEHSLSPADLGSPASPKESS). Ser-171 and Ser-182 each carry phosphoserine. Lys-211 is covalently cross-linked (Glycyl lysine isopeptide (Lys-Gly) (interchain with G-Cter in SUMO2)). The NCD2 stretch occupies residues 220-309 (LLKNNKKLAK…ARQVSREVTY (90 aa)). Positions 306-337 (EVTYKYTYRTTRLKCGERDELSPKRIKIEDGF) are necessary for nuclear localization. Residue Ser-327 is modified to Phosphoserine. Lys-332 is covalently cross-linked (Glycyl lysine isopeptide (Lys-Gly) (interchain with G-Cter in SUMO1); alternate). Residue Lys-332 forms a Glycyl lysine isopeptide (Lys-Gly) (interchain with G-Cter in SUMO2); alternate linkage. Residues Lys-354, Lys-368, and Lys-372 each participate in a glycyl lysine isopeptide (Lys-Gly) (interchain with G-Cter in SUMO2) cross-link. Residues 398-438 (RQSSGEQSPDGGLPSDSSDGQGERPLNLRIPSVQNRQPHHF) form a disordered region. Residues 404-417 (QSPDGGLPSDSSDG) show a composition bias toward low complexity. Ser-405 is subject to Phosphoserine. Residues Lys-453, Lys-464, and Lys-476 each participate in a glycyl lysine isopeptide (Lys-Gly) (interchain with G-Cter in SUMO2) cross-link. Lys-479 participates in a covalent cross-link: Glycyl lysine isopeptide (Lys-Gly) (interchain with G-Cter in SUMO1); alternate. A Glycyl lysine isopeptide (Lys-Gly) (interchain with G-Cter in SUMO2); alternate cross-link involves residue Lys-479.

It belongs to the NAB family. In terms of assembly, homomultimers may associate with EGR1 bound to DNA. Widely expressed in adult. In day 16 embryo highest levels in forebrain, thymus, salivary gland and cartilage.

It localises to the nucleus. Its function is as follows. Acts as a transcriptional repressor for zinc finger transcription factors EGR1 and EGR2. In Mus musculus (Mouse), this protein is NGFI-A-binding protein 1 (Nab1).